The following is a 234-amino-acid chain: Thiamine-phosphate synthase (234 aa).

4-amino-2-methyl-5-(diphosphooxymethyl)pyrimidine-binding positions include 52–56 (QYRSK) and Asn-84. Mg(2+) is bound by residues Asp-85 and Asp-104. Ser-123 contacts 4-amino-2-methyl-5-(diphosphooxymethyl)pyrimidine. 150–152 (SVT) contributes to the 2-[(2R,5Z)-2-carboxy-4-methylthiazol-5(2H)-ylidene]ethyl phosphate binding site. 4-amino-2-methyl-5-(diphosphooxymethyl)pyrimidine is bound at residue Lys-153. Gly-180 lines the 2-[(2R,5Z)-2-carboxy-4-methylthiazol-5(2H)-ylidene]ethyl phosphate pocket.

The protein belongs to the thiamine-phosphate synthase family. Mg(2+) serves as cofactor.

It catalyses the reaction 2-[(2R,5Z)-2-carboxy-4-methylthiazol-5(2H)-ylidene]ethyl phosphate + 4-amino-2-methyl-5-(diphosphooxymethyl)pyrimidine + 2 H(+) = thiamine phosphate + CO2 + diphosphate. The catalysed reaction is 2-(2-carboxy-4-methylthiazol-5-yl)ethyl phosphate + 4-amino-2-methyl-5-(diphosphooxymethyl)pyrimidine + 2 H(+) = thiamine phosphate + CO2 + diphosphate. It carries out the reaction 4-methyl-5-(2-phosphooxyethyl)-thiazole + 4-amino-2-methyl-5-(diphosphooxymethyl)pyrimidine + H(+) = thiamine phosphate + diphosphate. It participates in cofactor biosynthesis; thiamine diphosphate biosynthesis; thiamine phosphate from 4-amino-2-methyl-5-diphosphomethylpyrimidine and 4-methyl-5-(2-phosphoethyl)-thiazole: step 1/1. Its function is as follows. Condenses 4-methyl-5-(beta-hydroxyethyl)thiazole monophosphate (THZ-P) and 2-methyl-4-amino-5-hydroxymethyl pyrimidine pyrophosphate (HMP-PP) to form thiamine monophosphate (TMP). The protein is Thiamine-phosphate synthase of Nitrosospira multiformis (strain ATCC 25196 / NCIMB 11849 / C 71).